The following is a 228-amino-acid chain: Ephrin-A5 (228 aa).

Residues 1 to 20 (MLHVEMLTLLFLVLWMCVFS) form the signal peptide. One can recognise an Ephrin RBD domain in the interval 29–162 (ADRYAVYWNS…KLKVFVRPTN (134 aa)). Asn-37 carries an N-linked (GlcNAc...) asparagine glycan. 2 disulfide bridges follow: Cys-62/Cys-102 and Cys-90/Cys-151. Residues 186 to 205 (EPADDTVHESAEPSRGENAA) are disordered. A compositionally biased stretch (basic and acidic residues) spans 190 to 200 (DTVHESAEPSR). A lipid anchor (GPI-anchor amidated asparagine) is attached at Asn-203. A propeptide spans 204–228 (AAQTPRIPSRLLAILLFLLAMLLTL) (removed in mature form).

The protein belongs to the ephrin family. Binds to the receptor tyrosine kinases EPHA2, EPHA3, EPHB1 and EPHB2. Interacts with EPHA8; activates EPHA8. Forms a ternary EFNA5-EPHA3-ADAM10 complex mediating EFNA5 extracellular domain shedding by ADAM10 which regulates the EFNA5-EPHA3 complex internalization and function. Expressed in brain, heart, placenta and lung.

It localises to the cell membrane. The protein resides in the membrane. Its subcellular location is the caveola. Functionally, cell surface GPI-bound ligand for Eph receptors, a family of receptor tyrosine kinases which are crucial for migration, repulsion and adhesion during neuronal, vascular and epithelial development. Binds promiscuously Eph receptors residing on adjacent cells, leading to contact-dependent bidirectional signaling into neighboring cells. The signaling pathway downstream of the receptor is referred to as forward signaling while the signaling pathway downstream of the ephrin ligand is referred to as reverse signaling. Induces compartmentalized signaling within a caveolae-like membrane microdomain when bound to the extracellular domain of its cognate receptor. This signaling event requires the activity of the Fyn tyrosine kinase. Activates the EPHA3 receptor to regulate cell-cell adhesion and cytoskeletal organization. With the receptor EPHA2 may regulate lens fiber cells shape and interactions and be important for lens transparency maintenance. May function actively to stimulate axon fasciculation. The interaction of EFNA5 with EPHA5 also mediates communication between pancreatic islet cells to regulate glucose-stimulated insulin secretion. Cognate/functional ligand for EPHA7, their interaction regulates brain development modulating cell-cell adhesion and repulsion. This Rattus norvegicus (Rat) protein is Ephrin-A5 (Efna5).